Consider the following 651-residue polypeptide: Acetyl-coenzyme A synthetase (651 aa).

CoA is bound by residues Arg191–Lys194, Thr311, and Asn335. ATP is bound by residues Gly387 to Pro389, Asp411 to Thr416, Asp500, and Arg515. A CoA-binding site is contributed by Ser523. Arg526 is an ATP binding site. Residues Val537, His539, and Val542 each contribute to the Mg(2+) site. Arg584 lines the CoA pocket. N6-acetyllysine is present on Lys609.

Belongs to the ATP-dependent AMP-binding enzyme family. Requires Mg(2+) as cofactor. Acetylated. Deacetylation by the SIR2-homolog deacetylase activates the enzyme.

It catalyses the reaction acetate + ATP + CoA = acetyl-CoA + AMP + diphosphate. Its function is as follows. Catalyzes the conversion of acetate into acetyl-CoA (AcCoA), an essential intermediate at the junction of anabolic and catabolic pathways. AcsA undergoes a two-step reaction. In the first half reaction, AcsA combines acetate with ATP to form acetyl-adenylate (AcAMP) intermediate. In the second half reaction, it can then transfer the acetyl group from AcAMP to the sulfhydryl group of CoA, forming the product AcCoA. The polypeptide is Acetyl-coenzyme A synthetase (Pseudomonas savastanoi pv. phaseolicola (strain 1448A / Race 6) (Pseudomonas syringae pv. phaseolicola (strain 1448A / Race 6))).